The following is a 286-amino-acid chain: uncharacterized protein (286 aa).

Residues Ile-54, Asn-128, and Lys-162 each coordinate NADP(+). The Proton donor role is filled by Ser-178. Residues Tyr-192, Lys-196, Ile-225, and Thr-227 each coordinate NADP(+). Tyr-192 acts as the Proton acceptor in catalysis. Catalysis depends on Lys-196, which acts as the Lowers pKa of active site Tyr.

It belongs to the short-chain dehydrogenases/reductases (SDR) family.

This is an uncharacterized protein from Schizosaccharomyces pombe (strain 972 / ATCC 24843) (Fission yeast).